The primary structure comprises 839 residues: ABC transporter A family member 7 (839 aa).

The next 7 membrane-spanning stretches (helical) occupy residues 30-50 (GVQIAIPMALVIVLVILKLWI), 238-258 (IASLLGGSFFPFALSFVLPLF), 286-306 (IMTFIFNFLTYVVIVSVISLI), 321-341 (FALFLLLFLWGLSMVSFAFFL), 352-372 (SIFGYFFVMVMVNLNSTLSLF), 378-398 (VFYYWVPILAFSRGISTLCGL), and 419-439 (ILFWLFIDTIVYLTLAVYLDK). The ABC transporter domain occupies 525–756 (LIVQGLRKQF…FGDGYSVRID (232 aa)). Residue 559-566 (GPNGAGKT) participates in ATP binding.

Belongs to the ABC transporter superfamily. ABCA family.

The protein localises to the membrane. This Dictyostelium discoideum (Social amoeba) protein is ABC transporter A family member 7 (abcA7).